A 500-amino-acid chain; its full sequence is Glycerol kinase (500 aa).

Thr11 is a binding site for ADP. 3 residues coordinate ATP: Thr11, Thr12, and Ser13. Thr11 provides a ligand contact to sn-glycerol 3-phosphate. Arg15 lines the ADP pocket. Sn-glycerol 3-phosphate-binding residues include Arg81, Glu82, Tyr133, and Asp242. Glycerol-binding residues include Arg81, Glu82, Tyr133, Asp242, and Gln243. ADP-binding residues include Thr264 and Gly307. Residues Thr264, Gly307, Gln311, and Gly411 each coordinate ATP. Gly411 contributes to the ADP binding site.

It belongs to the FGGY kinase family.

The enzyme catalyses glycerol + ATP = sn-glycerol 3-phosphate + ADP + H(+). It participates in polyol metabolism; glycerol degradation via glycerol kinase pathway; sn-glycerol 3-phosphate from glycerol: step 1/1. Its activity is regulated as follows. Inhibited by fructose 1,6-bisphosphate (FBP). Its function is as follows. Key enzyme in the regulation of glycerol uptake and metabolism. Catalyzes the phosphorylation of glycerol to yield sn-glycerol 3-phosphate. This Rhodopseudomonas palustris (strain BisA53) protein is Glycerol kinase.